Reading from the N-terminus, the 284-residue chain is Shikimate dehydrogenase (NADP(+)) (284 aa).

Residues 20–22 (SIS) and Ser67 contribute to the shikimate site. The active-site Proton acceptor is the Lys71. Residue Asp83 coordinates NADP(+). Shikimate-binding residues include Asn92 and Asp107. Residues 129–133 (GAGGA) and Ile227 contribute to the NADP(+) site. Tyr229 is a binding site for shikimate. Gly250 is a binding site for NADP(+).

This sequence belongs to the shikimate dehydrogenase family. Homodimer.

The enzyme catalyses shikimate + NADP(+) = 3-dehydroshikimate + NADPH + H(+). It participates in metabolic intermediate biosynthesis; chorismate biosynthesis; chorismate from D-erythrose 4-phosphate and phosphoenolpyruvate: step 4/7. Functionally, involved in the biosynthesis of the chorismate, which leads to the biosynthesis of aromatic amino acids. Catalyzes the reversible NADPH linked reduction of 3-dehydroshikimate (DHSA) to yield shikimate (SA). In Streptococcus pneumoniae (strain 70585), this protein is Shikimate dehydrogenase (NADP(+)).